The chain runs to 149 residues: MKVIFLKDVKGKGKKGEIKNVADGYANNFLFKQGLAIEATPANIKALEAQKRKEQRQAEEELAKAKQLKEKLEQITVELSAKAGEGGRLFGSITSKQIAEVLQSQHQIKIDKRKIELDDAIRSLGYTNVPVKLHPEVTATLKVHVTEQK.

It belongs to the bacterial ribosomal protein bL9 family.

Its function is as follows. Binds to the 23S rRNA. The protein is Large ribosomal subunit protein bL9 of Geobacillus sp. (strain WCH70).